The sequence spans 284 residues: 4-diphosphocytidyl-2-C-methyl-D-erythritol kinase (284 aa).

The active site involves Lys14. 98 to 108 (PMGGGIGGGSS) is a binding site for ATP. Asp140 is a catalytic residue.

The protein belongs to the GHMP kinase family. IspE subfamily.

The catalysed reaction is 4-CDP-2-C-methyl-D-erythritol + ATP = 4-CDP-2-C-methyl-D-erythritol 2-phosphate + ADP + H(+). The protein operates within isoprenoid biosynthesis; isopentenyl diphosphate biosynthesis via DXP pathway; isopentenyl diphosphate from 1-deoxy-D-xylulose 5-phosphate: step 3/6. In terms of biological role, catalyzes the phosphorylation of the position 2 hydroxy group of 4-diphosphocytidyl-2C-methyl-D-erythritol. This Shewanella woodyi (strain ATCC 51908 / MS32) protein is 4-diphosphocytidyl-2-C-methyl-D-erythritol kinase.